Here is a 702-residue protein sequence, read N- to C-terminus: p-hydroxybenzoic acid--AMP ligase FadD22 (702 aa).

Residues 538–616 enclose the Carrier domain; sequence ERHRLVLDAV…GLAQYLEAEL (79 aa). An O-(pantetheine 4'-phosphoryl)serine modification is found at Ser576.

This sequence belongs to the ATP-dependent AMP-binding enzyme family.

The enzyme catalyses holo-[4-hydroxyphenylalkanoate synthase] + 4-hydroxybenzoate + ATP = 4-hydroxyphenyl-[4-hydroxyphenylalkanoate synthase] + AMP + diphosphate. It functions in the pathway lipid metabolism; fatty acid biosynthesis. Functionally, catalyzes the adenylation of p-hydroxybenzoic acid (pHBA) to form p-hydroxybenzoic acid-AMP (pHBA-AMP), which is converted directly to p-hydroxybenzoyl-S-FadD22 (pHBA-S-FAdD22) thioester intermediate in a CoA-independent manner by attack of the phosphopantetheine thiol of FadD22. This intermediate primes the biosynthesis of the phenolphthiocerol (PPOL) by presenting the pHBA starter unit for elongation by Pks15/1. PPOL is an important intermediate in the biosynthesis of phenolic glycolipid (mycosid B). The polypeptide is p-hydroxybenzoic acid--AMP ligase FadD22 (fadD22) (Mycobacterium marinum (strain ATCC BAA-535 / M)).